Here is a 472-residue protein sequence, read N- to C-terminus: Ulvan lyase (472 aa).

A signal peptide spans 1–21; the sequence is MIIKQYLLKISLCVLLLGCDS. Residues Asn-46 and Asn-109 each contribute to the substrate site. His-110 functions as the Proton donor in the catalytic mechanism. Substrate-binding residues include Lys-112 and His-130. Residue Tyr-175 is the Proton acceptor of the active site. Substrate is bound by residues Arg-191, His-195, and Tyr-233. His-195 serves as a coordination point for Zn(2+). His-251, Cys-253, and His-265 together coordinate Zn(2+). A substrate-binding site is contributed by His-265.

The protein belongs to the polysaccharide lyase 25 family.

Functionally, ulvan lyase involved in ulvan degradation. Ulvan is the main polysaccharide component of the Ulvales (green seaweed) cell wall. It is composed of disaccharide building blocks comprising 3-sulfated rhamnose (Rha3S) linked to D-glucuronic acid (GlcA), L-iduronic acid (IduA), or D-xylose (Xyl). Ulvan lyase catalyzes the endolytic cleavage of the glycosidic bond between Rha3S and the uronic acids GlcA or IduA, producing oligosaccharides that have unsaturated 4-deoxy-L-threo-hex-4-enopyranosiduronic acid (deltaUA) at the non-reducing end. This results eventually in the degradation of the ulvan polysaccharide into deltaUA-Rha3S disaccharides and deltaUA-Rha3S-Xyl-Rha3S tetrasaccharides. The protein is Ulvan lyase of Nonlabens ulvanivorans (Persicivirga ulvanivorans).